A 168-amino-acid polypeptide reads, in one-letter code: Photosystem I assembly protein Ycf3 (168 aa).

TPR repeat units follow at residues 35 to 68, 72 to 105, and 120 to 153; these read AFTY…EIDP, SYIL…NPFL, and GEQA…TPGN.

The protein belongs to the Ycf3 family.

Its subcellular location is the plastid. The protein localises to the chloroplast thylakoid membrane. Its function is as follows. Essential for the assembly of the photosystem I (PSI) complex. May act as a chaperone-like factor to guide the assembly of the PSI subunits. This Daucus carota (Wild carrot) protein is Photosystem I assembly protein Ycf3.